Reading from the N-terminus, the 407-residue chain is ETS domain-containing protein Elk-3 (407 aa).

Residues 5–85 (ITLWQFLLQL…IGQKFVYKFV (81 aa)) constitute a DNA-binding region (ETS). A Glycyl lysine isopeptide (Lys-Gly) (interchain with G-Cter in SUMO2) cross-link involves residue Lys-92. Ser-115 carries the phosphoserine modification. Lys-165 is covalently cross-linked (Glycyl lysine isopeptide (Lys-Gly) (interchain with G-Cter in SUMO2)). Disordered regions lie at residues 234–253 (SSAS…SPLP) and 271–298 (LEPL…KGLE). The CTBP-binding motif signature appears at 273–277 (PLNLS). Ser-396 carries the post-translational modification Phosphoserine.

The protein belongs to the ETS family. In terms of assembly, interacts with CTBP1.

Its subcellular location is the nucleus. May be a negative regulator of transcription, but can activate transcription when coexpressed with Ras, Src or Mos. Forms a ternary complex with the serum response factor and the ETS and SRF motifs of the Fos serum response element. The chain is ETS domain-containing protein Elk-3 (ELK3) from Homo sapiens (Human).